We begin with the raw amino-acid sequence, 345 residues long: 2-oxoglutarate-dependent ethylene/succinate-forming enzyme (345 aa).

The Fe2OG dioxygenase domain maps to 167–288 (GWHHMRVLRF…RFAMAYFHEP (122 aa)). Residues H191 and H270 each coordinate Fe cation.

Belongs to the iron/ascorbate-dependent oxidoreductase family. Monomer. The cofactor is Fe(2+).

The enzyme catalyses 2-oxoglutarate + O2 + 2 H(+) = ethene + 3 CO2 + H2O. It catalyses the reaction L-arginine + 2-oxoglutarate + O2 = guanidine + L-glutamate 5-semialdehyde + succinate + CO2. Its pathway is alkene biosynthesis; ethylene biosynthesis via 2-oxoglutarate. Its function is as follows. Simultaneously catalyzes two reactions, namely formation of ethylene and of succinate from 2-oxoglutarate. The sequence is that of 2-oxoglutarate-dependent ethylene/succinate-forming enzyme (efe) from Ralstonia nicotianae (strain ATCC BAA-1114 / GMI1000) (Ralstonia solanacearum).